The chain runs to 583 residues: Bifunctional lycopene cyclase/phytoene synthase (583 aa).

A lycopene beta-cyclase region spans residues Met1–Asn243. Transmembrane regions (helical) follow at residues Phe3–Leu23, Lys35–Ile55, Ile75–Leu97, Tyr120–Ile140, Leu151–Ile171, Ala173–Val193, and Ile221–Phe241. Residues Thr250 to Lys583 are phytoene synthase.

It in the N-terminal section; belongs to the lycopene beta-cyclase family. In the C-terminal section; belongs to the phytoene/squalene synthase family.

The protein localises to the membrane. The catalysed reaction is all-trans-lycopene = gamma-carotene. The enzyme catalyses gamma-carotene = all-trans-beta-carotene. It carries out the reaction 2 (2E,6E,10E)-geranylgeranyl diphosphate = 15-cis-phytoene + 2 diphosphate. It functions in the pathway carotenoid biosynthesis; beta-carotene biosynthesis. The protein operates within carotenoid biosynthesis; phytoene biosynthesis; all-trans-phytoene from geranylgeranyl diphosphate: step 1/1. Functionally, bifunctional enzyme that catalyzes the reactions from geranylgeranyl diphosphate to phytoene (phytoene synthase) and lycopene to beta-carotene via the intermediate gamma-carotene (lycopene cyclase). The protein is Bifunctional lycopene cyclase/phytoene synthase of Pyrenophora tritici-repentis (strain Pt-1C-BFP) (Wheat tan spot fungus).